Here is a 156-residue protein sequence, read N- to C-terminus: NADH-ubiquinone oxidoreductase 20 kDa subunit (156 aa).

4 residues coordinate [4Fe-4S] cluster: C33, C34, C98, and C128.

It belongs to the complex I 20 kDa subunit family. [4Fe-4S] cluster is required as a cofactor.

Its subcellular location is the mitochondrion. It carries out the reaction a ubiquinone + NADH + 5 H(+)(in) = a ubiquinol + NAD(+) + 4 H(+)(out). This chain is NADH-ubiquinone oxidoreductase 20 kDa subunit (NAD10), found in Paramecium tetraurelia.